A 315-amino-acid chain; its full sequence is Methionyl-tRNA formyltransferase (315 aa).

A (6S)-5,6,7,8-tetrahydrofolate-binding site is contributed by 113 to 116 (SLLP).

Belongs to the Fmt family.

It catalyses the reaction L-methionyl-tRNA(fMet) + (6R)-10-formyltetrahydrofolate = N-formyl-L-methionyl-tRNA(fMet) + (6S)-5,6,7,8-tetrahydrofolate + H(+). Its function is as follows. Attaches a formyl group to the free amino group of methionyl-tRNA(fMet). The formyl group appears to play a dual role in the initiator identity of N-formylmethionyl-tRNA by promoting its recognition by IF2 and preventing the misappropriation of this tRNA by the elongation apparatus. This chain is Methionyl-tRNA formyltransferase, found in Escherichia coli O127:H6 (strain E2348/69 / EPEC).